The following is a 558-amino-acid chain: Formate--tetrahydrofolate ligase (558 aa).

66-73 (TPAGEGKT) lines the ATP pocket.

It belongs to the formate--tetrahydrofolate ligase family.

It catalyses the reaction (6S)-5,6,7,8-tetrahydrofolate + formate + ATP = (6R)-10-formyltetrahydrofolate + ADP + phosphate. It functions in the pathway one-carbon metabolism; tetrahydrofolate interconversion. The chain is Formate--tetrahydrofolate ligase from Clostridium kluyveri (strain NBRC 12016).